The chain runs to 149 residues: Basic phospholipase A2 homolog MitTx-beta (149 aa).

The N-terminal stretch at 1–30 (MDKMNPAHLLVLAAVCVSLLGASSIPPQAL) is a signal peptide. Intrachain disulfides connect cysteine 41-cysteine 100, cysteine 55-cysteine 148, cysteine 57-cysteine 73, cysteine 72-cysteine 130, cysteine 79-cysteine 123, cysteine 89-cysteine 116, and cysteine 109-cysteine 121.

This sequence belongs to the phospholipase A2 family. Group I subfamily. K49 sub-subfamily. Heterodimer of an alpha (Kunitz-type) and a beta (phospholipase A2 homolog) chains; non-covalently-linked. In terms of tissue distribution, expressed by the venom gland.

Its subcellular location is the secreted. Functionally, heterodimer: MitTx, a heteromeric complex between Kunitz- and phospholipase-A2-like proteins, potently, persistently and selectively activates rat and chicken acid-sensing ion channel ASIC1. Both alternatively spliced rat isoforms ASIC1a and ASIC1b are activated, with a higher potency for ASIC1a (EC(50)=9.4 nM) vs ASIC1b (EC(50)=23 nM). The rat ASIC3 subtype is also sensitive to the heterodimer, but with a lower potency (EC(50)=830 nM). On rat ASIC2a, the toxin shows a very weak activation, but produces a remarkable potentiation (&gt;100-fold) of protons when the extracellular pH drops below neutrality. Moderate and weak activations are also observed on the heterotrimers Asic1a-Asic2a and Asic1a-Asic3 (expressed in CHO cells), respectively. The binding sites of the beta subunit of MitTx and the spider psalmotoxin-1 toxin overlap, explaining why these toxins are mutually exclusive. In vivo, the heterodimer elicits robust pain-related behavior in mice by activation of ASIC1 channels on capsaicin-sensitive nerve fibers. Monomer: does not have phospholipase A2 activity but may maintain some lipid-binding character from its PLA2 lineage, which could aid in effecting neuronal depolarization. The chain is Basic phospholipase A2 homolog MitTx-beta from Micrurus tener tener (Texas coral snake).